The following is a 395-amino-acid chain: Methylthioribose-1-phosphate isomerase (395 aa).

Aspartate 258 acts as the Proton donor in catalysis.

This sequence belongs to the eIF-2B alpha/beta/delta subunits family. MtnA subfamily.

It localises to the cytoplasm. It is found in the nucleus. It catalyses the reaction 5-(methylsulfanyl)-alpha-D-ribose 1-phosphate = 5-(methylsulfanyl)-D-ribulose 1-phosphate. It participates in amino-acid biosynthesis; L-methionine biosynthesis via salvage pathway; L-methionine from S-methyl-5-thio-alpha-D-ribose 1-phosphate: step 1/6. Functionally, catalyzes the interconversion of methylthioribose-1-phosphate (MTR-1-P) into methylthioribulose-1-phosphate (MTRu-1-P). This chain is Methylthioribose-1-phosphate isomerase, found in Podospora anserina (strain S / ATCC MYA-4624 / DSM 980 / FGSC 10383) (Pleurage anserina).